A 714-amino-acid chain; its full sequence is Phosphoribosylformylglycinamidine synthase subunit PurL (714 aa).

The active site involves His34. Tyr37 lines the ATP pocket. Glu78 lines the Mg(2+) pocket. Substrate contacts are provided by residues 79 to 82 (SHNH) and Arg101. His80 (proton acceptor) is an active-site residue. Asp102 serves as a coordination point for Mg(2+). Gln226 serves as a coordination point for substrate. Asp254 lines the Mg(2+) pocket. 298 to 300 (ESQ) serves as a coordination point for substrate. Residues Asp474 and Gly511 each contribute to the ATP site. Asn512 is a Mg(2+) binding site. Ser514 contributes to the substrate binding site.

The protein belongs to the FGAMS family. In terms of assembly, monomer. Part of the FGAM synthase complex composed of 1 PurL, 1 PurQ and 2 PurS subunits.

Its subcellular location is the cytoplasm. The enzyme catalyses N(2)-formyl-N(1)-(5-phospho-beta-D-ribosyl)glycinamide + L-glutamine + ATP + H2O = 2-formamido-N(1)-(5-O-phospho-beta-D-ribosyl)acetamidine + L-glutamate + ADP + phosphate + H(+). It participates in purine metabolism; IMP biosynthesis via de novo pathway; 5-amino-1-(5-phospho-D-ribosyl)imidazole from N(2)-formyl-N(1)-(5-phospho-D-ribosyl)glycinamide: step 1/2. Functionally, part of the phosphoribosylformylglycinamidine synthase complex involved in the purines biosynthetic pathway. Catalyzes the ATP-dependent conversion of formylglycinamide ribonucleotide (FGAR) and glutamine to yield formylglycinamidine ribonucleotide (FGAM) and glutamate. The FGAM synthase complex is composed of three subunits. PurQ produces an ammonia molecule by converting glutamine to glutamate. PurL transfers the ammonia molecule to FGAR to form FGAM in an ATP-dependent manner. PurS interacts with PurQ and PurL and is thought to assist in the transfer of the ammonia molecule from PurQ to PurL. This is Phosphoribosylformylglycinamidine synthase subunit PurL from Methanothermobacter thermautotrophicus (strain ATCC 29096 / DSM 1053 / JCM 10044 / NBRC 100330 / Delta H) (Methanobacterium thermoautotrophicum).